A 132-amino-acid polypeptide reads, in one-letter code: Large ribosomal subunit protein bL17 (132 aa).

It belongs to the bacterial ribosomal protein bL17 family. In terms of assembly, part of the 50S ribosomal subunit. Contacts protein L32.

The protein is Large ribosomal subunit protein bL17 of Albidiferax ferrireducens (strain ATCC BAA-621 / DSM 15236 / T118) (Rhodoferax ferrireducens).